A 127-amino-acid chain; its full sequence is MAKASIQFFRGVDEPVVPDIRLTRSRDGLTGQATFRFEQPAAIAPETMGDITGMWMVDEEGEMVTREINGKFVNGTASALEAVYSWKSVQDFERFMRFAQRYAEANGLGYSQNQNSDQTDGDANAEA.

Residues 107–127 (GLGYSQNQNSDQTDGDANAEA) are disordered. The segment covering 109–118 (GYSQNQNSDQ) has biased composition (polar residues).

The protein belongs to the Psb28 family. Part of the photosystem II complex.

Its subcellular location is the cellular thylakoid membrane. The polypeptide is Photosystem II reaction center Psb28 protein (Parasynechococcus marenigrum (strain WH8102)).